Consider the following 42-residue polypeptide: Photosystem II reaction center protein J (42 aa).

Residues 12-32 (LWFVGMIVGLAALGLLGIFFY) traverse the membrane as a helical segment.

This sequence belongs to the PsbJ family. PSII is composed of 1 copy each of membrane proteins PsbA, PsbB, PsbC, PsbD, PsbE, PsbF, PsbH, PsbI, PsbJ, PsbK, PsbL, PsbM, PsbT, PsbX, PsbY, PsbZ, Psb30/Ycf12, at least 3 peripheral proteins of the oxygen-evolving complex and a large number of cofactors. It forms dimeric complexes.

It localises to the plastid. The protein resides in the chloroplast thylakoid membrane. Functionally, one of the components of the core complex of photosystem II (PSII). PSII is a light-driven water:plastoquinone oxidoreductase that uses light energy to abstract electrons from H(2)O, generating O(2) and a proton gradient subsequently used for ATP formation. It consists of a core antenna complex that captures photons, and an electron transfer chain that converts photonic excitation into a charge separation. In Nephroselmis olivacea (Green alga), this protein is Photosystem II reaction center protein J.